The primary structure comprises 186 residues: Ribosome-recycling factor (186 aa).

It belongs to the RRF family.

The protein resides in the cytoplasm. Its function is as follows. Responsible for the release of ribosomes from messenger RNA at the termination of protein biosynthesis. May increase the efficiency of translation by recycling ribosomes from one round of translation to another. The sequence is that of Ribosome-recycling factor from Brucella melitensis biotype 2 (strain ATCC 23457).